Consider the following 1226-residue polypeptide: 3-hydroxy-3-methylglutaryl-coenzyme A reductase (1226 aa).

The next 5 membrane-spanning stretches (helical) occupy residues Ile17 to Gly37, Ile224 to Ala244, Phe252 to Met272, Val337 to Asn357, and Leu373 to Val393. Positions Asp223–Ile391 constitute an SSD domain. Residues Leu428–Arg449 are disordered. Over residues Lys434–Asn445 the composition is skewed to polar residues. Residues Leu481–Ser501 traverse the membrane as a helical segment. Disordered regions lie at residues Ala683–Leu702 and Leu722–Pro742. Over residues Ala685–Leu702 the composition is skewed to pro residues. Glu869 acts as the Charge relay system in catalysis. Residue Ser875–Lys881 participates in CoA binding. NADP(+) contacts are provided by residues Ser936 to Phe938 and Asp963 to Ser971. Catalysis depends on Lys1001, which acts as the Charge relay system. Val1030–Lys1032 serves as a coordination point for CoA. The active-site Charge relay system is the Asp1077. The chain crosses the membrane as a helical span at residues Ile1150 to His1170. CoA is bound at residue Ala1174–His1175. His1175 (proton donor) is an active-site residue. Residue Asn1179–Arg1180 coordinates NADP(+). Positions Gln1182–Lys1226 are disordered. The segment covering His1201 to Ala1210 has biased composition (polar residues).

It belongs to the HMG-CoA reductase family.

The protein resides in the endoplasmic reticulum membrane. It catalyses the reaction (R)-mevalonate + 2 NADP(+) + CoA = (3S)-3-hydroxy-3-methylglutaryl-CoA + 2 NADPH + 2 H(+). It participates in metabolic intermediate biosynthesis; (R)-mevalonate biosynthesis; (R)-mevalonate from acetyl-CoA: step 3/3. Functionally, HMG-CoA reductase; part of the first module of ergosterol biosynthesis pathway that includes the early steps of the pathway, conserved across all eukaryotes, and which results in the formation of mevalonate from acetyl-coenzyme A (acetyl-CoA). This module also plays a key role in the biosynthesis of triterpenes such as ganoderic acids (GA), a group of highly oxygenated lanostane-type triterpenoids which are well recognized as a main group of unique bioactive compounds in the medicinal mushroom Ganoderma lucidum. In this module, the acetyl-CoA acetyltransferase catalyzes the formation of acetoacetyl-CoA. The hydroxymethylglutaryl-CoA synthase HMGS then condenses acetyl-CoA with acetoacetyl-CoA to form HMG-CoA. The rate-limiting step of the early module is the reduction to mevalonate by the 3-hydroxy-3-methylglutaryl-coenzyme A (HMG-CoA) reductase. This Ganoderma lucidum (Ling zhi medicinal fungus) protein is 3-hydroxy-3-methylglutaryl-coenzyme A reductase.